Here is a 1107-residue protein sequence, read N- to C-terminus: MPVMKGLLAPQNTFLDTIATRFDGTHSNFILANAQVAKGFPIVYCSDGFCELAGFARTEVMQKSCSCKFLFGVETNEQLMLQIEKSLEEKTEFKGEIMFYKKNGSPFWCLLDIVPIKNEKGDVVLFLASFKDITDTKVKITPEDKKEDKVKGRSRAGTHFDSARRRSRAVLYHISGHLQRREKNKLKINNNVFVDKPAFPEYKVSDAKKSKFILLHFSTFKAGWDWLILLATFYVAVTVPYNVCFIGNDDLSTTRSTTVSDIAVEILFIIDIILNFRTTYVSKSGQVIFEARSICIHYVTTWFIIDLIAALPFDLLYAFNVTVVSLVHLLKTVRLLRLLRLLQKLDRYSQHSTIVLTLLMSMFALLAHWMACIWYVIGKMEREDNSLLKWEVGWLHELGKRLESPYYGNNTLGGPSIRSAYIAALYFTLSSLTSVGFGNVSANTDAEKIFSICTMLIGALMHALVFGNVTAIIQRMYSRWSLYHTRTKDLKDFIRVHHLPQQLKQRMLEYFQTTWSVNNGIDSNELLKDFPDELRSDITMHLNKEILQLSLFECASRGCLRSLSLHIKTSFCAPGEYLLRQGDALQAIYFVCSGSMEVLKDSMVLAILGKGDLIGANLSIKDQVIKTNADVKALTYCDLQCIILKGLFEVLDLYPEYAHKFVEDIQHDLTYNLREGHESDVISRLSNKSMVSQSEPKGNGNINKRLPSIVEDEEEEEEGEEEEAVSLSPICTRGSSSRNKKVGSNKAYLGLSLKQLASGTVPFHSPIRVSRSNSPKTKQEIDPPNHNKRKEKNLKLQLSTLNNAGPPDLSPRIVDGIEDGNSSEESQTFDFGSERIRSEPRISPPLGDPEIGAAVLFIKAEETKQQINKLNSEVTTLTQEVSQLGKDMRNVIQLLENVLSPQQPSRFCSLHSTSVCPSRESLQTRTSWSAHQPCLHLQTGGAAYTQAQLCSSNITSDIWSVDPSSVGSSPQRTGAHEQNPADSELYHSPSLDYSPSHYQVVQEGHLQFLRCISPHSDSTLTPLQSISATLSSSVCSSSETSLHLVLPSRSEEGSFSQGTVSSFSLENLPGSWNQEGMASASTKPLENLPLEVVTSTAEVKDNKAINV.

The Cytoplasmic segment spans residues 1 to 225 (MPVMKGLLAP…HFSTFKAGWD (225 aa)). Residues 18 to 90 (IATRFDGTHS…LQIEKSLEEK (73 aa)) form the PAS domain. In terms of domain architecture, PAC spans 93-145 (FKGEIMFYKKNGSPFWCLLDIVPIKNEKGDVVLFLASFKDITDTKVKITPEDK). Residues 226–246 (WLILLATFYVAVTVPYNVCFI) form a helical membrane-spanning segment. At 247 to 255 (GNDDLSTTR) the chain is on the extracellular side. Residues 256 to 276 (STTVSDIAVEILFIIDIILNF) form a helical membrane-spanning segment. Residues 277–298 (RTTYVSKSGQVIFEARSICIHY) lie on the Cytoplasmic side of the membrane. A helical transmembrane segment spans residues 299 to 319 (VTTWFIIDLIAALPFDLLYAF). N-linked (GlcNAc...) asparagine glycosylation occurs at N320. At 320-327 (NVTVVSLV) the chain is on the extracellular side. A helical; Voltage-sensor transmembrane segment spans residues 328 to 348 (HLLKTVRLLRLLRLLQKLDRY). Over 349-357 (SQHSTIVLT) the chain is Cytoplasmic. Residues 358–378 (LLMSMFALLAHWMACIWYVIG) form a helical membrane-spanning segment. The Extracellular portion of the chain corresponds to 379-419 (KMEREDNSLLKWEVGWLHELGKRLESPYYGNNTLGGPSIRS). N409 carries N-linked (GlcNAc...) asparagine glycosylation. The segment at residues 420 to 440 (AYIAALYFTLSSLTSVGFGNV) is an intramembrane region (pore-forming). A Selectivity filter motif is present at residues 434–439 (SVGFGN). Residues 441 to 448 (SANTDAEK) are Extracellular-facing. The chain crosses the membrane as a helical span at residues 449–469 (IFSICTMLIGALMHALVFGNV). At 470–1107 (TAIIQRMYSR…EVKDNKAINV (638 aa)) the chain is on the cytoplasmic side. Residues 551–668 (LFECASRGCL…HKFVEDIQHD (118 aa)) are cNMP-binding domain. A compositionally biased stretch (polar residues) spans 686–702 (SNKSMVSQSEPKGNGNI). Disordered regions lie at residues 686-742 (SNKS…NKKV), 764-791 (HSPI…KRKE), 818-847 (EDGN…PPLG), and 961-989 (VDPS…YHSP). The span at 710-724 (VEDEEEEEEGEEEEA) shows a compositional bias: acidic residues. Positions 961-972 (VDPSSVGSSPQR) are enriched in polar residues.

Belongs to the potassium channel family. H (Eag) (TC 1.A.1.20) subfamily. Kv12.1/KCNH8 sub-subfamily. In terms of assembly, the potassium channel is probably composed of a homo- or heterotetrameric complex of pore-forming alpha subunits that can associate with modulating beta subunits. In terms of tissue distribution, primarily expressed in the nervous system.

The protein localises to the membrane. The enzyme catalyses K(+)(in) = K(+)(out). Functionally, pore-forming (alpha) subunit of a voltage-gated delayed rectifier potassium channel that mediates outward-rectifying potassium currents. Elicits a slowly activating, non-inactivating and slowly deactivation outwards potassium current at depolarizating voltages from -30 mV to +50mV. Shows no obvious change in the activation rate from different holding potentials. Activation is strongly dependent on the pH of the external solution. This chain is Voltage-gated delayed rectifier potassium channel KCNH8, found in Homo sapiens (Human).